Consider the following 111-residue polypeptide: MSAAIQFIRGVDEEVIPDVRLTRAKDGSSGRAIFYFENPNLIQEGKLEVMGMYLQDEEGELTTLDVSAKFVNGKPHAIEANYDMKSEEEWDRFMRFMNRYAESHGLGFSKS.

This sequence belongs to the Psb28 family. As to quaternary structure, part of the photosystem II complex.

The protein resides in the cellular thylakoid membrane. This chain is Photosystem II reaction center Psb28 protein, found in Acaryochloris marina (strain MBIC 11017).